A 494-amino-acid chain; its full sequence is Casein kinase I homolog HRR25 (494 aa).

Positions 9–278 (FRIGRKIGSG…LARLFKDLSI (270 aa)) constitute a Protein kinase domain. Residues 15 to 23 (IGSGSFGDI) and lysine 38 contribute to the ATP site. Aspartate 128 acts as the Proton acceptor in catalysis. Serine 143 carries the phosphoserine modification. Residues 394-494 (RQQQPQQQVQ…DKPAGQSIWL (101 aa)) form a disordered region. Low complexity-rich tracts occupy residues 395-418 (QQQP…QQQP) and 432-444 (QQQQ…QQQQ). Polar residues predominate over residues 445–479 (VPMATTRATQYPPQINSNNFNTNQASVPPQMRSNP).

It belongs to the protein kinase superfamily. CK1 Ser/Thr protein kinase family. Casein kinase I subfamily. In terms of assembly, interacts with HRI1. Interacts with ELP1/IKI3; the interaction leads to ELP1/IKI3 phosphorylation.

The protein localises to the cytoplasm. The protein resides in the nucleus. Its subcellular location is the nucleolus. It localises to the nucleoplasm. The enzyme catalyses L-seryl-[protein] + ATP = O-phospho-L-seryl-[protein] + ADP + H(+). It carries out the reaction L-threonyl-[protein] + ATP = O-phospho-L-threonyl-[protein] + ADP + H(+). Protein kinase which phosphorylates serine and threonine residues. Can use casein as a substrate. Phosphorylates elongator complex member ELP1/IKI3 on 'Ser-1198' and 'Ser-1202' which promotes the tRNA modification function of the complex. Associated with repair of damaged DNA and meiosis. This is Casein kinase I homolog HRR25 (HRR25) from Saccharomyces cerevisiae (strain ATCC 204508 / S288c) (Baker's yeast).